The chain runs to 154 residues: 2S sulfur-rich seed storage protein 2 (154 aa).

A signal peptide spans 1–22; the sequence is MAKMSVVAAALLALLVLGQATA. Residues 29–52 are disordered; the sequence is TTLEEEQEENPRGRSEQQCREQME. Over residues 37-52 the composition is skewed to basic and acidic residues; the sequence is ENPRGRSEQQCREQME. Intrachain disulfides connect Cys-47-Cys-101, Cys-60-Cys-90, Cys-91-Cys-138, and Cys-103-Cys-145. Residues 72–76 constitute a propeptide that is removed on maturation; that stretch reads PYQNP. Positions 151-154 are excised as a propeptide; that stretch reads TAWL.

Belongs to the 2S seed storage albumins family. In terms of assembly, the mature protein consists of a small and a large chain linked by disulfide bonds.

Functionally, this is a 2S seed storage protein. This Bertholletia excelsa (Brazil nut) protein is 2S sulfur-rich seed storage protein 2 (BE2S2).